The chain runs to 120 residues: Aspartate 1-decarboxylase (120 aa).

S25 serves as the catalytic Schiff-base intermediate with substrate; via pyruvic acid. S25 bears the Pyruvic acid (Ser) mark. T57 contributes to the substrate binding site. Y58 serves as the catalytic Proton donor. 72–74 (GAA) serves as a coordination point for substrate.

Belongs to the PanD family. In terms of assembly, heterooctamer of four alpha and four beta subunits. Pyruvate serves as cofactor. Post-translationally, is synthesized initially as an inactive proenzyme, which is activated by self-cleavage at a specific serine bond to produce a beta-subunit with a hydroxyl group at its C-terminus and an alpha-subunit with a pyruvoyl group at its N-terminus.

Its subcellular location is the cytoplasm. It catalyses the reaction L-aspartate + H(+) = beta-alanine + CO2. It functions in the pathway cofactor biosynthesis; (R)-pantothenate biosynthesis; beta-alanine from L-aspartate: step 1/1. Its function is as follows. Catalyzes the pyruvoyl-dependent decarboxylation of aspartate to produce beta-alanine. This chain is Aspartate 1-decarboxylase, found in Helicobacter hepaticus (strain ATCC 51449 / 3B1).